Here is a 231-residue protein sequence, read N- to C-terminus: NADH-ubiquinone oxidoreductase chain 4 (231 aa).

Helical transmembrane passes span 1 to 21, 34 to 54, 61 to 80, 84 to 106, 128 to 148, 156 to 176, and 211 to 231; these read PIAG…YGII, VFLP…LTCL, SLIA…AIII, WGLS…LFCL, ILPM…ATPP, LLII…LGLS, and LLMI…ELVI.

This sequence belongs to the complex I subunit 4 family.

The protein localises to the mitochondrion membrane. It catalyses the reaction a ubiquinone + NADH + 5 H(+)(in) = a ubiquinol + NAD(+) + 4 H(+)(out). In terms of biological role, core subunit of the mitochondrial membrane respiratory chain NADH dehydrogenase (Complex I) that is believed to belong to the minimal assembly required for catalysis. Complex I functions in the transfer of electrons from NADH to the respiratory chain. The immediate electron acceptor for the enzyme is believed to be ubiquinone. The polypeptide is NADH-ubiquinone oxidoreductase chain 4 (MT-ND4) (Tropidolaemus wagleri (Wagler's pit viper)).